The chain runs to 134 residues: Cytochrome b5 (134 aa).

The Cytochrome b5 heme-binding domain maps to 6–82 (VKYFTRAEVA…MKQYKVGELV (77 aa)). Positions 41 and 65 each coordinate heme. A helical transmembrane segment spans residues 111–131 (WLMPFVLGLVATLIYKFFFGT).

It belongs to the cytochrome b5 family.

The protein localises to the endoplasmic reticulum membrane. It localises to the microsome membrane. In terms of biological role, cytochrome b5 is a membrane bound hemoprotein which function as an electron carrier for several membrane bound oxygenases. The polypeptide is Cytochrome b5 (Cyt-b5) (Musca domestica (House fly)).